Here is a 431-residue protein sequence, read N- to C-terminus: Isocitrate lyase (431 aa).

Residues 1-21 (MSNVGTPRTAQEIQQDWDTNP) are disordered. Substrate is bound at residue 93-95 (SGW). D155 serves as a coordination point for Mg(2+). Catalysis depends on C193, which acts as the Proton acceptor. Substrate contacts are provided by residues 194-195 (GH), R230, 315-319 (NCSPS), and T349.

This sequence belongs to the isocitrate lyase/PEP mutase superfamily. Isocitrate lyase family. In terms of assembly, homotetramer. Mg(2+) is required as a cofactor.

It carries out the reaction D-threo-isocitrate = glyoxylate + succinate. Its pathway is carbohydrate metabolism; glyoxylate cycle; (S)-malate from isocitrate: step 1/2. In terms of biological role, involved in the metabolic adaptation in response to environmental changes. Catalyzes the reversible formation of succinate and glyoxylate from isocitrate, a key step of the glyoxylate cycle, which operates as an anaplerotic route for replenishing the tricarboxylic acid cycle during growth on fatty acid substrates. This Corynebacterium efficiens (strain DSM 44549 / YS-314 / AJ 12310 / JCM 11189 / NBRC 100395) protein is Isocitrate lyase (aceA).